The sequence spans 442 residues: UDP-N-acetylmuramate--L-alanine ligase (442 aa).

109-115 (GAHGKTS) is a binding site for ATP.

Belongs to the MurCDEF family.

The protein localises to the cytoplasm. It catalyses the reaction UDP-N-acetyl-alpha-D-muramate + L-alanine + ATP = UDP-N-acetyl-alpha-D-muramoyl-L-alanine + ADP + phosphate + H(+). It participates in cell wall biogenesis; peptidoglycan biosynthesis. In terms of biological role, cell wall formation. The chain is UDP-N-acetylmuramate--L-alanine ligase from Streptococcus pyogenes serotype M2 (strain MGAS10270).